A 305-amino-acid polypeptide reads, in one-letter code: Alpha-N-acetylgalactosaminide alpha-2,6-sialyltransferase 3 (305 aa).

At 1–8 the chain is on the cytoplasmic side; it reads MACILKRK. The helical; Signal-anchor for type II membrane protein transmembrane segment at 9 to 29 threads the bilayer; the sequence is PALAVSFIALCILLLAMRLAN. Over 30-305 the chain is Lumenal; the sequence is DVTFPLLLNC…VFTHPNWTVS (276 aa). An intrachain disulfide couples cysteine 80 to cysteine 229. Residues asparagine 239 and asparagine 301 are each glycosylated (N-linked (GlcNAc...) asparagine).

This sequence belongs to the glycosyltransferase 29 family. In adults it is highly expressed in spleen, followed by kidney and lesser in lung. Not found in liver and skeletal muscle. In newborns it is abundantly expressed in brain and kidney.

The protein localises to the golgi apparatus membrane. It carries out the reaction an alpha-Neu5Ac-(2-&gt;3)-beta-D-Gal-(1-&gt;3)-D-GlcNAc derivative + CMP-N-acetyl-beta-neuraminate = an alpha-Neu5Ac-(2-&gt;3)-beta-D-Gal-(1-&gt;3)-[alpha-Neu5Ac-(2-&gt;6)]-D-GlcNAc derivative + CMP + H(+). The enzyme catalyses a ganglioside GM1b + CMP-N-acetyl-beta-neuraminate = a ganglioside GD1alpha + CMP + H(+). It catalyses the reaction a ganglioside GM1b (d18:1(4E)) + CMP-N-acetyl-beta-neuraminate = a ganglioside GD1alpha (d18:1(4E)) + CMP + H(+). The catalysed reaction is a globoside MSGG + CMP-N-acetyl-beta-neuraminate = a globoside DSGG + CMP + H(+). It carries out the reaction 3-O-[alpha-Neu5Ac-(2-&gt;3)-beta-D-Gal-(1-&gt;3)-alpha-D-GalNAc]-L-Ser-[protein] + CMP-N-acetyl-beta-neuraminate = a 3-O-{alpha-Neu5Ac-(2-&gt;3)-beta-D-Gal-(1-&gt;3)-[alpha-Neu5Ac-(2-&gt;6)]-alpha-D-GalNAc}-L-seryl-[protein] + CMP + H(+). The enzyme catalyses 3-O-[alpha-Neu5Ac-(2-&gt;3)-beta-D-Gal-(1-&gt;3)-alpha-D-GalNAc]-L-Thr-[protein] + CMP-N-acetyl-beta-neuraminate = a 3-O-{alpha-Neu5Ac-(2-&gt;3)-beta-D-Gal-(1-&gt;3)-[alpha-Neu5Ac-(2-&gt;6)]-alpha-D-GalNAc}-L-threonyl-[protein] + CMP + H(+). It participates in protein modification; protein glycosylation. It functions in the pathway glycolipid biosynthesis. Its function is as follows. Transfers the sialyl group (N-acetyl-alpha-neuraminyl or NeuAc) from CMP-NeuAc to the GalNAc residue on the NeuAc-alpha-2,3-Gal-beta-1,3-GalNAc sequence of glycoproteins and glycolipids forming an alpha-2,6-linkage. Produces branched type disialyl structures by transfer of a sialyl group onto a GalNAc residue inside the backbone core chains. ST6GalNAcIII prefers glycolipids to glycoproteins, predominantly catalyzing the biosynthesis of ganglioside GD1alpha from GM1b. GD1alpha is a critical molecule in the communication and interaction between neuronal cells and their supportive cells, particularly in brain tissues, and functions as an adhesion molecule in the process of metastasis. Sialylation of glycoproteins or glycosphingolipids is very important in tumor development, neuronal development, nerve repair, immunological processes and regulation of hormone sensitivity. This is Alpha-N-acetylgalactosaminide alpha-2,6-sialyltransferase 3 (St6galnac3) from Rattus norvegicus (Rat).